The sequence spans 198 residues: Prostamide/prostaglandin F synthase (198 aa).

At Tyr-108 the chain carries Phosphotyrosine.

Belongs to the peroxiredoxin-like PRXL2 family. Prostamide/prostaglandin F synthase subfamily.

The protein resides in the cytoplasm. It is found in the cytosol. The catalysed reaction is prostaglandin H2 + [thioredoxin]-dithiol = prostaglandin F2alpha + [thioredoxin]-disulfide. The enzyme catalyses prostamide F2alpha + [thioredoxin]-disulfide = prostamide H2 + [thioredoxin]-dithiol. Functionally, catalyzes the reduction of prostaglandin-ethanolamide H(2) (prostamide H(2)) to prostamide F(2alpha) with NADPH as proton donor. Also able to reduce prostaglandin H(2) to prostaglandin F(2alpha). The protein is Prostamide/prostaglandin F synthase (PRXL2B) of Pongo abelii (Sumatran orangutan).